The following is a 192-amino-acid chain: Large ribosomal subunit protein bL25 (192 aa).

The protein belongs to the bacterial ribosomal protein bL25 family. CTC subfamily. Part of the 50S ribosomal subunit; part of the 5S rRNA/L5/L18/L25 subcomplex. Contacts the 5S rRNA. Binds to the 5S rRNA independently of L5 and L18.

Its function is as follows. This is one of the proteins that binds to the 5S RNA in the ribosome where it forms part of the central protuberance. The sequence is that of Large ribosomal subunit protein bL25 from Solidesulfovibrio magneticus (strain ATCC 700980 / DSM 13731 / RS-1) (Desulfovibrio magneticus).